A 105-amino-acid chain; its full sequence is uncharacterized protein (105 aa).

The segment at 80 to 105 (TGGPTSSTCTRRSDLATGRGSDRRPD) is disordered.

This is an uncharacterized protein from Micromonospora rosea.